Consider the following 321-residue polypeptide: Cytochrome c biogenesis protein CcsA (321 aa).

Helical transmembrane passes span 9-29 (ILTH…LITL), 44-64 (GMIA…ASSG), 68-88 (LSNL…LHMI), 143-163 (MLLS…LLMI), 226-246 (VISL…VWAN), 260-274 (TWAF…IYLH), and 289-309 (VASI…LLGI).

This sequence belongs to the CcmF/CycK/Ccl1/NrfE/CcsA family. In terms of assembly, may interact with Ccs1.

Its subcellular location is the plastid. It localises to the chloroplast thylakoid membrane. Its function is as follows. Required during biogenesis of c-type cytochromes (cytochrome c6 and cytochrome f) at the step of heme attachment. The polypeptide is Cytochrome c biogenesis protein CcsA (Oryza sativa (Rice)).